A 1441-amino-acid chain; its full sequence is Lysophospholipase NTE1 (1441 aa).

Residues 1-22 (MWLTSYVLPRLKNILLLQFHIT) lie on the Lumenal side of the membrane. The chain crosses the membrane as a helical span at residues 23–43 (LPLNYLVLLLLSTVIITYLFL). Over 44-1441 (RTRILSNYSQ…ENMLQRRNSI (1398 aa)) the chain is Cytoplasmic. Disordered regions lie at residues 154–173 (SNPSGDAAANATAFEPPSND), 210–236 (THLNEGTHPSTTNNTPGPGSPNLTGEI), 376–445 (QDDT…NSSS), and 551–585 (NRTGGKMASHSKRLNGSSRSNSRTDRSESFDHFRN). Over residues 376 to 388 (QDDTGSSASTIQK) the composition is skewed to polar residues. Over residues 572 to 585 (SRTDRSESFDHFRN) the composition is skewed to basic and acidic residues. Residues 592-718 (NQFS…LTNS) and 707-836 (IYLK…VAKK) contribute to the a nucleoside 3',5'-cyclic phosphate site. The PNPLA domain occupies 1137–1301 (LVLGGGGARG…VDNLPVTEMT (165 aa)). The GXGXXG signature appears at 1141-1146 (GGGARG). Positions 1168 to 1172 (GTSIG) match the GXSXG motif. Residue serine 1170 is the Nucleophile of the active site. The active-site Proton acceptor is the aspartate 1288. Positions 1288 to 1290 (DGG) match the DGA/G motif.

It belongs to the NTE family.

Its subcellular location is the endoplasmic reticulum membrane. The enzyme catalyses a 1-acyl-sn-glycero-3-phosphocholine + H2O = sn-glycerol 3-phosphocholine + a fatty acid + H(+). With respect to regulation, inhibited by organophosphorus esters. In terms of biological role, intracellular phospholipase B that catalyzes the double deacylation of phosphatidylcholine (PC) to glycerophosphocholine (GroPCho). Plays an important role in membrane lipid homeostasis. Responsible for the rapid PC turnover in response to inositol, elevated temperatures, or when choline is present in the growth medium. The sequence is that of Lysophospholipase NTE1 (NTE1) from Kluyveromyces lactis (strain ATCC 8585 / CBS 2359 / DSM 70799 / NBRC 1267 / NRRL Y-1140 / WM37) (Yeast).